The sequence spans 425 residues: Histidine--tRNA ligase (425 aa).

This sequence belongs to the class-II aminoacyl-tRNA synthetase family. As to quaternary structure, homodimer.

The protein localises to the cytoplasm. The enzyme catalyses tRNA(His) + L-histidine + ATP = L-histidyl-tRNA(His) + AMP + diphosphate + H(+). The polypeptide is Histidine--tRNA ligase (Streptococcus uberis (strain ATCC BAA-854 / 0140J)).